The sequence spans 495 residues: Probable cytochrome P450 513C1 (495 aa).

The chain crosses the membrane as a helical span at residues 1-21; it reads MNYLVLILVSLVSIYFLFIKN. Heme is bound at residue Cys-441.

This sequence belongs to the cytochrome P450 family. Requires heme as cofactor.

It localises to the membrane. The protein is Probable cytochrome P450 513C1 (cyp513C1) of Dictyostelium discoideum (Social amoeba).